We begin with the raw amino-acid sequence, 308 residues long: PHO85 cyclin-2 (308 aa).

One can recognise a Cyclin N-terminal domain in the interval E18–T146. A disordered region spans residues S248–K270. Residues D255 to R264 are compositionally biased toward basic and acidic residues.

It belongs to the cyclin family. PCL1,2 subfamily. Forms a cyclin-CDK complex with PHO85. Interacts with RVS167.

The protein localises to the cytoplasm. Its subcellular location is the nucleus. Functionally, G1/S-specific cyclin partner of the cyclin-dependent kinase (CDK) PHO85. Essential for the control of the cell cycle at the G1/S (start) transition. Together with cyclin PCL1, positively controls degradation of sphingoid long chain base kinase LCB4. The PCL2-PHO85 cyclin-CDK holoenzyme phosphorylates LCB4, which is required for its ubiquitination and degradation. PCL2-PHO85 also phosphorylates RVS167, linking cyclin-CDK activity with organization of the actin cytoskeleton. The polypeptide is PHO85 cyclin-2 (PCL2) (Saccharomyces cerevisiae (strain ATCC 204508 / S288c) (Baker's yeast)).